A 213-amino-acid polypeptide reads, in one-letter code: Thymidine kinase (213 aa).

ATP contacts are provided by residues 20-27 and 93-96; these read GPMFSGKT and DEAQ. Glu94 (proton acceptor) is an active-site residue. Residues Cys150, Cys153, Cys185, and His188 each contribute to the Zn(2+) site.

Belongs to the thymidine kinase family. As to quaternary structure, homotetramer.

Its subcellular location is the cytoplasm. The catalysed reaction is thymidine + ATP = dTMP + ADP + H(+). The chain is Thymidine kinase from Mycoplasma genitalium (strain ATCC 33530 / DSM 19775 / NCTC 10195 / G37) (Mycoplasmoides genitalium).